Consider the following 330-residue polypeptide: DNA repair and recombination protein RadA (330 aa).

G124–T131 is an ATP binding site.

This sequence belongs to the eukaryotic RecA-like protein family.

Functionally, involved in DNA repair and in homologous recombination. Binds and assemble on single-stranded DNA to form a nucleoprotein filament. Hydrolyzes ATP in a ssDNA-dependent manner and promotes DNA strand exchange between homologous DNA molecules. This is DNA repair and recombination protein RadA from Pyrobaculum neutrophilum (strain DSM 2338 / JCM 9278 / NBRC 100436 / V24Sta) (Thermoproteus neutrophilus).